The sequence spans 80 residues: Mitotic-spindle organizing protein 1 (80 aa).

The protein belongs to the MOZART1 family. In terms of assembly, part of the gamma-tubulin complex.

The protein localises to the cytoplasm. Its subcellular location is the cytoskeleton. It localises to the microtubule organizing center. The protein resides in the spindle pole body. In terms of biological role, required for gamma-tubulin complex recruitment to the microtubule organizing center (MTOC). In Pyricularia oryzae (strain 70-15 / ATCC MYA-4617 / FGSC 8958) (Rice blast fungus), this protein is Mitotic-spindle organizing protein 1.